A 440-amino-acid chain; its full sequence is tRNA-2-methylthio-N(6)-dimethylallyladenosine synthase (440 aa).

Positions 4–120 constitute an MTTase N-terminal domain; the sequence is NYVYIETFGC…LNDMVLAAER (117 aa). Residues Cys13, Cys49, Cys83, Cys158, Cys162, and Cys165 each coordinate [4Fe-4S] cluster. The region spanning 144-374 is the Radical SAM core domain; that stretch reads GTARISSFVT…QALQKRTTME (231 aa). Residues 377-439 enclose the TRAM domain; sequence DVLLGTRQTV…QNSLLGELLP (63 aa).

Belongs to the methylthiotransferase family. MiaB subfamily. In terms of assembly, monomer. [4Fe-4S] cluster serves as cofactor.

The protein resides in the cytoplasm. It carries out the reaction N(6)-dimethylallyladenosine(37) in tRNA + (sulfur carrier)-SH + AH2 + 2 S-adenosyl-L-methionine = 2-methylsulfanyl-N(6)-dimethylallyladenosine(37) in tRNA + (sulfur carrier)-H + 5'-deoxyadenosine + L-methionine + A + S-adenosyl-L-homocysteine + 2 H(+). Catalyzes the methylthiolation of N6-(dimethylallyl)adenosine (i(6)A), leading to the formation of 2-methylthio-N6-(dimethylallyl)adenosine (ms(2)i(6)A) at position 37 in tRNAs that read codons beginning with uridine. This is tRNA-2-methylthio-N(6)-dimethylallyladenosine synthase from Pelobacter propionicus (strain DSM 2379 / NBRC 103807 / OttBd1).